The following is a 333-amino-acid chain: Protein-methionine-sulfoxide reductase catalytic subunit MsrP (333 aa).

Positions M1–A43 form a signal peptide, tat-type signal. Residues N87, Y90 to E91, C145, T180, N232, R237, and N248 to K250 each bind Mo-molybdopterin.

It belongs to the MsrP family. As to quaternary structure, heterodimer of a catalytic subunit (MsrP) and a heme-binding subunit (MsrQ). Requires Mo-molybdopterin as cofactor. Predicted to be exported by the Tat system. The position of the signal peptide cleavage has not been experimentally proven.

It is found in the periplasm. It carries out the reaction L-methionyl-[protein] + a quinone + H2O = L-methionyl-(S)-S-oxide-[protein] + a quinol. The catalysed reaction is L-methionyl-[protein] + a quinone + H2O = L-methionyl-(R)-S-oxide-[protein] + a quinol. In terms of biological role, part of the MsrPQ system that repairs oxidized periplasmic proteins containing methionine sulfoxide residues (Met-O), using respiratory chain electrons. Thus protects these proteins from oxidative-stress damage caused by reactive species of oxygen and chlorine generated by the host defense mechanisms. MsrPQ is essential for the maintenance of envelope integrity under bleach stress, rescuing a wide series of structurally unrelated periplasmic proteins from methionine oxidation. The catalytic subunit MsrP is non-stereospecific, being able to reduce both (R-) and (S-) diastereoisomers of methionine sulfoxide. This is Protein-methionine-sulfoxide reductase catalytic subunit MsrP from Pectobacterium carotovorum subsp. carotovorum (strain PC1).